Consider the following 213-residue polypeptide: PRA1 family protein B2 (213 aa).

A disordered region spans residues 1–21 (MSSSPAILPVTNQQAATQSQP). Helical transmembrane passes span 75–94 (LAYFKVNYSAIVSLVLAFSL), 98–117 (PFSLLVLLSLLGSWMFLYLF), 137–157 (LLGLVLTTIVVVFMTSVGSLL), 161–181 (LTIGIAIVCLHGAFRVPDDLF), and 190–210 (AGLLSFIGNSAATSAAASVVA).

Belongs to the PRA1 family. In terms of assembly, interacts with PRA1B1, PRA1B3, PRA1B4, PRA1B5, PRA1B6 and PRA1E.

Its subcellular location is the endosome membrane. Its function is as follows. May be involved in both secretory and endocytic intracellular trafficking in the endosomal/prevacuolar compartments. This chain is PRA1 family protein B2 (PRA1B2), found in Arabidopsis thaliana (Mouse-ear cress).